The sequence spans 174 residues: MQDFVPNSSYTREELIACGNGELFGPGNAQLPVPNMLMLDRIAHISTTGGEYGKGEIIAELDIHKDLWFFGCHFPGDPVMPGCLGLDAMWQLVGFFLAWKGNPGRGRALGSGEVKFTGQILPTAKQVTYHIHLKRVIERKLIMGIADGRVAVDGKEIYFAKDLRVGLFSNTDTF.

Residue His-73 is part of the active site.

The protein belongs to the thioester dehydratase family. FabA subfamily. Homodimer.

It is found in the cytoplasm. The catalysed reaction is a (3R)-hydroxyacyl-[ACP] = a (2E)-enoyl-[ACP] + H2O. It carries out the reaction (3R)-hydroxydecanoyl-[ACP] = (2E)-decenoyl-[ACP] + H2O. The enzyme catalyses (2E)-decenoyl-[ACP] = (3Z)-decenoyl-[ACP]. It participates in lipid metabolism; fatty acid biosynthesis. Its function is as follows. Necessary for the introduction of cis unsaturation into fatty acids. Catalyzes the dehydration of (3R)-3-hydroxydecanoyl-ACP to E-(2)-decenoyl-ACP and then its isomerization to Z-(3)-decenoyl-ACP. Can catalyze the dehydratase reaction for beta-hydroxyacyl-ACPs with saturated chain lengths up to 16:0, being most active on intermediate chain length. The sequence is that of 3-hydroxydecanoyl-[acyl-carrier-protein] dehydratase from Teredinibacter turnerae (strain ATCC 39867 / T7901).